We begin with the raw amino-acid sequence, 1514 residues long: ABC transporter C family member 5 (1514 aa).

10 consecutive transmembrane segments (helical) span residues 16-36, 76-96, 111-131, 142-162, 177-197, 312-332, 334-354, 421-441, 446-466, and 533-553; these read LLELCSVIINLLLFLVFLFAV, FGFNLSLLCCLYVLGVQVLVL, FVLCFPASQSLAWFVLSFLVL, PFLVRIWWFLAFSICLCTMYV, SHVVANLAVTPALGFLCFLAW, VFAGLNTLVSYVGPYLISYFV, YLGGKEIFPHEGYVLAGIFFT, WYLHDIWMLPMQIVLALAILY, IAAVATLVATIISILVTIPLA, and FIFWSSPIFVAAVTFATSIFL. Residues 307–588 form the ABC transmembrane type-1 1 domain; it reads AACNAVFAGL…FPDLVSMMAQ (282 aa). The 224-residue stretch at 622-845 folds into the ABC transporter 1 domain; sequence IEIKDGVFCW…GTDFKALVSA (224 aa). 657–664 contributes to the ATP binding site; it reads GTVGSGKS. Residues 899 to 927 adopt a coiled-coil conformation; sequence ASDLKAIKEKKKKAKRSRKKQLVQEEERV. Helical transmembrane passes span 946–966, 986–1006, 1078–1098, 1117–1137, 1155–1175, and 1180–1200; these read GALIPLIILAQAAFQFLQIAS, PTLLLIVYTALAFGSSVFIFV, IVAVMTNVTWQVFLLVVPVAV, IVSIQKSPIIHLFGESIAGAA, LLDCFVRPFFCSIAAIEWLCL, and LSTLVFAFCMVLLVSFPHGTI. Positions 949-1231 constitute an ABC transmembrane type-1 2 domain; that stretch reads IPLIILAQAA…WILSFCKLEN (283 aa). An ABC transporter 2 domain is found at 1268 to 1502; sequence IELVDVKVRY…KSSMFLKLVT (235 aa). Residue 1302–1309 coordinates ATP; that stretch reads GRTGSGKS.

The protein belongs to the ABC transporter superfamily. ABCC family. Conjugate transporter (TC 3.A.1.208) subfamily. Ubiquitous, mostly in vascular tissues and epidermis, including guard cells.

The protein resides in the membrane. It catalyses the reaction ATP + H2O + xenobioticSide 1 = ADP + phosphate + xenobioticSide 2.. With respect to regulation, (E(2)17G) transport activity in negatively regulated by organic anions such as oestradiol-3-sulfate, luteolin-7-O-diglucuronide-4'-O-glucuronide, glycocholate, vanadate and the sulfonylurea glibenclamide, and, to a lower extent, by bafilomycin A1, NH(4)Cl, GSH, GSSG and DNB-GS. Pump for glutathione S-conjugates. Involved in regulation of K(+) and Na(+) cell content. Mediates resistance to NaCl and Li(+), confers sensitivity to sulfonylurea drugs such as glibenclamide (inducer of stomatal opening), and required for stomatal opening regulation by auxin, abscisic acid (ABA) and external Ca(2+). Transports oestradiol-17-(beta-D-glucuronide) (E(2)17G). Involved in the root auxin content regulation that controls the transition from primary root elongation to lateral root formation. Plays a role in ABA-mediated germination inhibition. High-affinity inositol hexakisphosphate transporter that plays a role in guard cell signaling and phytic acid storage. Required for phytic acid accumulation in developing seeds. Phytic acid is the primary storage form of phosphorus in cereal grains and other plant seeds. The chain is ABC transporter C family member 5 (ABCC5) from Arabidopsis thaliana (Mouse-ear cress).